The primary structure comprises 93 residues: Molybdopterin synthase sulfur carrier subunit (93 aa).

Glycine 93 is modified (1-thioglycine; alternate). Glycine 93 is modified (glycyl adenylate; alternate).

This sequence belongs to the MoaD family. MOCS2A subfamily. As to quaternary structure, heterotetramer; composed of 2 small (MOCS2A) and 2 large (MOCS2B) subunits. C-terminal thiocarboxylation occurs in 2 steps, it is first acyl-adenylated (-COAMP) via the hesA/moeB/thiF part of uba4, then thiocarboxylated (-COSH) via the rhodanese domain of uba4.

The protein localises to the cytoplasm. It functions in the pathway cofactor biosynthesis; molybdopterin biosynthesis. In terms of biological role, acts as a sulfur carrier required for molybdopterin biosynthesis. Component of the molybdopterin synthase complex that catalyzes the conversion of precursor Z into molybdopterin by mediating the incorporation of 2 sulfur atoms into precursor Z to generate a dithiolene group. In the complex, serves as sulfur donor by being thiocarboxylated (-COSH) at its C-terminus by uba4. After interaction with MOCS2B, the sulfur is then transferred to precursor Z to form molybdopterin. The polypeptide is Molybdopterin synthase sulfur carrier subunit (Pyrenophora tritici-repentis (strain Pt-1C-BFP) (Wheat tan spot fungus)).